Reading from the N-terminus, the 544-residue chain is CTP synthase (544 aa).

An amidoligase domain region spans residues Met1–Leu267. Ser13 is a binding site for CTP. Ser13 contacts UTP. Ser14–Ile19 lines the ATP pocket. Position 54 (Tyr54) interacts with L-glutamine. Residue Asp71 coordinates ATP. Residues Asp71 and Glu141 each coordinate Mg(2+). Residues Asp148–Glu150, Lys188–Gln193, and Lys224 contribute to the CTP site. Residues Lys188–Gln193 and Lys224 contribute to the UTP site. The Glutamine amidotransferase type-1 domain maps to Glu292 to Gln534. Gly354 is a binding site for L-glutamine. Residue Cys381 is the Nucleophile; for glutamine hydrolysis of the active site. L-glutamine-binding positions include Leu382–Gln385, Glu405, and Arg462. Residues His507 and Glu509 contribute to the active site.

This sequence belongs to the CTP synthase family. Homotetramer.

The enzyme catalyses UTP + L-glutamine + ATP + H2O = CTP + L-glutamate + ADP + phosphate + 2 H(+). It carries out the reaction L-glutamine + H2O = L-glutamate + NH4(+). It catalyses the reaction UTP + NH4(+) + ATP = CTP + ADP + phosphate + 2 H(+). Its pathway is pyrimidine metabolism; CTP biosynthesis via de novo pathway; CTP from UDP: step 2/2. Its activity is regulated as follows. Allosterically activated by GTP, when glutamine is the substrate; GTP has no effect on the reaction when ammonia is the substrate. The allosteric effector GTP functions by stabilizing the protein conformation that binds the tetrahedral intermediate(s) formed during glutamine hydrolysis. Inhibited by the product CTP, via allosteric rather than competitive inhibition. In terms of biological role, catalyzes the ATP-dependent amination of UTP to CTP with either L-glutamine or ammonia as the source of nitrogen. Regulates intracellular CTP levels through interactions with the four ribonucleotide triphosphates. The protein is CTP synthase of Synechococcus sp. (strain JA-2-3B'a(2-13)) (Cyanobacteria bacterium Yellowstone B-Prime).